A 188-amino-acid polypeptide reads, in one-letter code: Ribosome-recycling factor (188 aa).

This sequence belongs to the RRF family.

It localises to the cytoplasm. Its function is as follows. Responsible for the release of ribosomes from messenger RNA at the termination of protein biosynthesis. May increase the efficiency of translation by recycling ribosomes from one round of translation to another. In Gluconobacter oxydans (strain 621H) (Gluconobacter suboxydans), this protein is Ribosome-recycling factor.